Here is a 500-residue protein sequence, read N- to C-terminus: Glutamate--tRNA ligase (500 aa).

Positions 12 to 22 (PSPTGHLHIGN) match the 'HIGH' region motif. A 'KMSKS' region motif is present at residues 259–263 (KLSKR). K262 serves as a coordination point for ATP.

This sequence belongs to the class-I aminoacyl-tRNA synthetase family. Glutamate--tRNA ligase type 1 subfamily. As to quaternary structure, monomer.

Its subcellular location is the cytoplasm. It carries out the reaction tRNA(Glu) + L-glutamate + ATP = L-glutamyl-tRNA(Glu) + AMP + diphosphate. Its function is as follows. Catalyzes the attachment of glutamate to tRNA(Glu) in a two-step reaction: glutamate is first activated by ATP to form Glu-AMP and then transferred to the acceptor end of tRNA(Glu). This Lactobacillus delbrueckii subsp. bulgaricus protein is Glutamate--tRNA ligase.